Consider the following 1149-residue polypeptide: MINRDNKKAITKKGMISNRLNKFSIRKYTVGTASILVGTTLIFGLGNQEAKAAENTSTENAKQDEASASDNKEVVSETENNSTQKNDLTNPIKKETNTDSHQEAKEAPTTSSTQQQQNNATTSTETKPQNIEKENVKPSTDKTATEDTSVILEEKKAPNNTNNDVTTKPSTSEIQTTPTTPQESTNIENSQPQPTPSKVDNQVTDAINPKEPVNVSKEELKNNPEKLKELVRNDSNTDRSTKPVATAPTSVAPKRVNAKIRFAVAQPAAVASNNVNDLITVTKQMITEGIKDDGVIQAHDGEHIIYTSDFKIDNAVKAGDTMTVKYDKHTIPSDITDDFTPVDITDPSGEVIAKGTFDLNTKTITYKFTDYVDRYENVNAKLELNSYIDKKEVPNETNLNLTFATADKETSKNVKVEYQKPIVKDESNIQSIFSHLDTTKHEVEQTIYVNPLKLNAKNTNVTIKSGGVADNGDYYTGDGSTIIDSNTEIKVYKVASGQQLPQSNKIYDYSQYEDVTNSVTINKNYGTNMANINFGDIDSAYIVKVVSKYTPGAEDDLAVQQGVRMTTTNKYNYSSYAGYTNTILSTTDSGGGDGTVKPEEKLYKIGDYVWEDVDKDGVQGTDSKEKPMANVLVTLTYPDGTTKSVRTDANGHYEFGGLKDGETYTVKFETPAGYLPTKENGTTDGEKDSNGSSVTVKINGKDDMSLDTGFYKEPKYNLGDYVWEDTNKDGIQDANEPGIKDVKVTLKDSTGKVIGTTTTDASGKYKFTDLDNGNYTVEFETPAGYTPTVKNTTAEDKDSNGLTTTGVIKDADNWTLDSGFYKTPKYSLGDYVWYDSNKDGKQDSTEKGIKDVTVTLQNEKGEVIGTTKTDENGKYRFDNLDSGKYKVIFEKPAGLTQTGTNTTEDDKDADGGEVDVTITDHDDFTLDNGYFEEDTSDSDSDSDSDSDSDSDSDSDSDSDSDSDSDSDSDSDSDSDSDSDSDSDSDSDSDSDSDSDSDSDSDSDSDSDSDSDSDSDSDSDSDSDSDSDSDSDSDSDSDSDSDSDSDSDSDSDSDSDSDSDSDSDSDSDSDSDSDSDSDSDSDSDSDSDSDAGKHTPVKPMSATKDHHNKAKALPETGSENNGSNNATLFGGLFAALGSLLLFGRRKKQNK.

Residues 1–52 form the signal peptide; that stretch reads MINRDNKKAITKKGMISNRLNKFSIRKYTVGTASILVGTTLIFGLGNQEAKA. The segment at 53–601 is ligand binding A region; it reads AENTSTENAK…GDGTVKPEEK (549 aa). Disordered regions lie at residues 54–249 and 675–697; these read ENTS…TAPT and LPTK…VTVK. Residues 61–75 are compositionally biased toward basic and acidic residues; it reads AKQDEASASDNKEVV. Over residues 77 to 89 the composition is skewed to polar residues; sequence ETENNSTQKNDLT. Residues 92-106 show a composition bias toward basic and acidic residues; sequence IKKETNTDSHQEAKE. The segment covering 109–126 has biased composition (low complexity); the sequence is TTSSTQQQQNNATTSTET. Positions 130–145 are enriched in basic and acidic residues; it reads NIEKENVKPSTDKTAT. Positions 158–205 are enriched in polar residues; sequence PNNTNNDVTTKPSTSEIQTTPTTPQESTNIENSQPQPTPSKVDNQVTD. The span at 216 to 241 shows a compositional bias: basic and acidic residues; that stretch reads SKEELKNNPEKLKELVRNDSNTDRST. 3 CNA-B domains span residues 602–714, 715–824, and 825–935; these read LYKI…YKEP, KYNL…YKTP, and KYSL…EEDT. The tract at residues 896 to 1124 is disordered; that stretch reads TQTGTNTTED…TGSENNGSNN (229 aa). Composition is skewed to acidic residues over residues 903-913 and 930-1088; these read TEDDKDADGGE and YFEE…DSDS. The short motif at 1112–1116 is the LPXTG sorting signal element; the sequence is LPETG. A Pentaglycyl murein peptidoglycan amidated threonine modification is found at threonine 1115. The propeptide at 1116-1149 is removed by sortase; sequence GSENNGSNNATLFGGLFAALGSLLLFGRRKKQNK.

Belongs to the serine-aspartate repeat-containing protein (SDr) family.

The protein localises to the secreted. Its subcellular location is the cell wall. Functionally, specifically interacts with bone sialoprotein (BSP), a glycoprotein of bone and dentin extracellular matrix. Could contribute to staphylococcal osteomyelitis and arthritis. The polypeptide is Bone sialoprotein-binding protein (bbp) (Staphylococcus aureus).